The primary structure comprises 473 residues: Anthocyanidin-3-O-glucoside rhamnosyltransferase (473 aa).

The protein belongs to the UDP-glycosyltransferase family. In terms of tissue distribution, expressed in petals, styles and anthers.

The protein operates within pigment biosynthesis; anthocyanin biosynthesis. In terms of biological role, controls the rhamnosylation of reddish anthocyanidin-3-O-glucosides, which is the first step in a series of modifications that finally yield magenta or blue/purple coloured anthocyanins. Controls the conversion of anthocyanidin-3-O-glucosides to anthocyanidin-3-O-rutinosides. This is Anthocyanidin-3-O-glucoside rhamnosyltransferase from Petunia hybrida (Petunia).